The chain runs to 193 residues: Ion-translocating oxidoreductase complex subunit A (193 aa).

6 helical membrane-spanning segments follow: residues 5 to 25 (ALLLLSTALVNNVVLVKFLGL), 39 to 59 (LGMGLATTFVITLAAAASWML), 62 to 82 (WLLAPFDLGFLRILSFILVIA), 102 to 122 (SLGIYLPLITTNCAVLGVALL), 134 to 154 (VLFGFGSALGFTLVLLIFAGL), and 172 to 192 (AAFITISLLSLAFMGLSGLVA).

Belongs to the NqrDE/RnfAE family. The complex is composed of six subunits: RnfA, RnfB, RnfC, RnfD, RnfE and RnfG.

It is found in the cell inner membrane. Functionally, part of a membrane-bound complex that couples electron transfer with translocation of ions across the membrane. This is Ion-translocating oxidoreductase complex subunit A from Aromatoleum aromaticum (strain DSM 19018 / LMG 30748 / EbN1) (Azoarcus sp. (strain EbN1)).